The primary structure comprises 257 residues: Hydroxyethylthiazole kinase (257 aa).

M49 contacts substrate. ATP is bound by residues R124 and T170. G197 contacts substrate.

It belongs to the Thz kinase family. The cofactor is Mg(2+).

The catalysed reaction is 5-(2-hydroxyethyl)-4-methylthiazole + ATP = 4-methyl-5-(2-phosphooxyethyl)-thiazole + ADP + H(+). It participates in cofactor biosynthesis; thiamine diphosphate biosynthesis; 4-methyl-5-(2-phosphoethyl)-thiazole from 5-(2-hydroxyethyl)-4-methylthiazole: step 1/1. Functionally, catalyzes the phosphorylation of the hydroxyl group of 4-methyl-5-beta-hydroxyethylthiazole (THZ). In Klebsiella pneumoniae (strain 342), this protein is Hydroxyethylthiazole kinase.